Here is a 794-residue protein sequence, read N- to C-terminus: Zinc finger protein 148 (794 aa).

Residue lysine 6 forms a Glycyl lysine isopeptide (Lys-Gly) (interchain with G-Cter in SUMO2) linkage. At serine 51 the chain carries Phosphoserine. Residues lysine 88, lysine 115, and lysine 132 each participate in a glycyl lysine isopeptide (Lys-Gly) (interchain with G-Cter in SUMO2) cross-link. The segment at 171 to 193 adopts a C2H2-type 1 zinc-finger fold; the sequence is HVCEHCNAAFRTNYHLQRHVFIH. The residue at position 194 (threonine 194) is a Phosphothreonine. 2 C2H2-type zinc fingers span residues 199-221 and 227-249; these read FQCSQCDMRFIQKYLLQRHEKIH and FRCDECGMRFIQKYHMERHKRTH. Serine 250 is subject to Phosphoserine. The C2H2-type 4 zinc finger occupies 255 to 278; that stretch reads YQCEYCLQYFSRTDRVLKHKRMCH. Lysine 291 participates in a covalent cross-link: Glycyl lysine isopeptide (Lys-Gly) (interchain with G-Cter in SUMO2). A disordered region spans residues 298–336; it reads EEDSGFSTSPKDNSLPKKKRQKTEKKSSGMDKESALDKS. 2 positions are modified to phosphoserine: serine 301 and serine 306. Lysine 308 is covalently cross-linked (Glycyl lysine isopeptide (Lys-Gly) (interchain with G-Cter in SUMO2)). Over residues 321–336 the composition is skewed to basic and acidic residues; it reads EKKSSGMDKESALDKS. A Glycyl lysine isopeptide (Lys-Gly) (interchain with G-Cter in SUMO1); alternate cross-link involves residue lysine 356. Residue lysine 356 forms a Glycyl lysine isopeptide (Lys-Gly) (interchain with G-Cter in SUMO2); alternate linkage. Lysine 402 participates in a covalent cross-link: Glycyl lysine isopeptide (Lys-Gly) (interchain with G-Cter in SUMO2). Position 412 is a phosphoserine (serine 412). Glycyl lysine isopeptide (Lys-Gly) (interchain with G-Cter in SUMO2) cross-links involve residues lysine 421 and lysine 424. The segment covering 574–588 has biased composition (polar residues); it reads NSSEVPEVTPSENVG. The segment at 574-599 is disordered; that stretch reads NSSEVPEVTPSENVGSSSQASSSDKA. Lysine 607 is subject to N6-acetyllysine. Serine 665 and serine 784 each carry phosphoserine.

Belongs to the krueppel C2H2-type zinc-finger protein family. As to quaternary structure, interacts with HNRNPDL. Interacts with the 5FMC complex; the interaction requires association with CHTOP. Interacts with CAVIN1. Sumoylated with SUMO2. Desumoylated by SENP3, resulting in the stimulation of transcription of its target genes.

The protein localises to the nucleus. In terms of biological role, involved in transcriptional regulation. Represses the transcription of a number of genes including gastrin, stromelysin and enolase. Binds to the G-rich box in the enhancer region of these genes. The polypeptide is Zinc finger protein 148 (ZNF148) (Pongo abelii (Sumatran orangutan)).